The sequence spans 842 residues: Non-motile and phage-resistance protein (842 aa).

Transmembrane regions (helical) follow at residues 29-50 (VFVR…AFGV), 283-303 (GAFS…LLMI), and 343-363 (VYLS…VVSG). Residues 318-389 (SERRFRLAVE…QALANAAMYG (72 aa)) enclose the PAS domain. Residues 607-830 (NMSHELRTPL…TVSFTLPVRH (224 aa)) form the Histidine kinase domain. His610 carries the post-translational modification Phosphohistidine; by autocatalysis.

Its subcellular location is the cell membrane. The catalysed reaction is ATP + protein L-histidine = ADP + protein N-phospho-L-histidine.. Functionally, member of the two-component regulatory system involved in the regulation of polar organelle development. PleC functions as a membrane-associated protein kinase that transfers phosphate to the response regulator PleD, leading to its activation. This is Non-motile and phage-resistance protein (pleC) from Caulobacter vibrioides (strain ATCC 19089 / CIP 103742 / CB 15) (Caulobacter crescentus).